Reading from the N-terminus, the 237-residue chain is Ribosomal RNA large subunit methyltransferase E (237 aa).

S-adenosyl-L-methionine is bound by residues glycine 76, tryptophan 78, aspartate 99, aspartate 115, and aspartate 139. The active-site Proton acceptor is the lysine 179.

Belongs to the class I-like SAM-binding methyltransferase superfamily. RNA methyltransferase RlmE family.

The protein localises to the cytoplasm. The enzyme catalyses uridine(2552) in 23S rRNA + S-adenosyl-L-methionine = 2'-O-methyluridine(2552) in 23S rRNA + S-adenosyl-L-homocysteine + H(+). Specifically methylates the uridine in position 2552 of 23S rRNA at the 2'-O position of the ribose in the fully assembled 50S ribosomal subunit. This chain is Ribosomal RNA large subunit methyltransferase E, found in Rhodopseudomonas palustris (strain TIE-1).